The primary structure comprises 100 residues: Small ribosomal subunit protein uS14c (100 aa).

It belongs to the universal ribosomal protein uS14 family. Part of the 30S ribosomal subunit.

Its subcellular location is the plastid. The protein resides in the chloroplast. Functionally, binds 16S rRNA, required for the assembly of 30S particles. This Phaeodactylum tricornutum (strain CCAP 1055/1) protein is Small ribosomal subunit protein uS14c.